Here is a 305-residue protein sequence, read N- to C-terminus: 4-diphosphocytidyl-2-C-methyl-D-erythritol kinase (305 aa).

Lys15 is a catalytic residue. ATP is bound at residue 99 to 109 (PMGGGIGGGSS). Asp141 is an active-site residue.

Belongs to the GHMP kinase family. IspE subfamily.

It catalyses the reaction 4-CDP-2-C-methyl-D-erythritol + ATP = 4-CDP-2-C-methyl-D-erythritol 2-phosphate + ADP + H(+). Its pathway is isoprenoid biosynthesis; isopentenyl diphosphate biosynthesis via DXP pathway; isopentenyl diphosphate from 1-deoxy-D-xylulose 5-phosphate: step 3/6. In terms of biological role, catalyzes the phosphorylation of the position 2 hydroxy group of 4-diphosphocytidyl-2C-methyl-D-erythritol. This chain is 4-diphosphocytidyl-2-C-methyl-D-erythritol kinase, found in Marinomonas sp. (strain MWYL1).